Reading from the N-terminus, the 276-residue chain is Dermonecrotic toxin LlSicTox-alphaIV3 (276 aa).

His5 is a catalytic residue. Residues Glu25 and Asp27 each coordinate Mg(2+). His41 serves as the catalytic Nucleophile. Disulfide bonds link Cys45-Cys51 and Cys47-Cys192. Asp85 provides a ligand contact to Mg(2+).

Belongs to the arthropod phospholipase D family. Class II subfamily. It depends on Mg(2+) as a cofactor. As to expression, expressed by the venom gland.

It localises to the secreted. It carries out the reaction an N-(acyl)-sphingosylphosphocholine = an N-(acyl)-sphingosyl-1,3-cyclic phosphate + choline. The catalysed reaction is an N-(acyl)-sphingosylphosphoethanolamine = an N-(acyl)-sphingosyl-1,3-cyclic phosphate + ethanolamine. The enzyme catalyses a 1-acyl-sn-glycero-3-phosphocholine = a 1-acyl-sn-glycero-2,3-cyclic phosphate + choline. It catalyses the reaction a 1-acyl-sn-glycero-3-phosphoethanolamine = a 1-acyl-sn-glycero-2,3-cyclic phosphate + ethanolamine. Dermonecrotic toxins cleave the phosphodiester linkage between the phosphate and headgroup of certain phospholipids (sphingolipid and lysolipid substrates), forming an alcohol (often choline) and a cyclic phosphate. This toxin acts on sphingomyelin (SM). It may also act on ceramide phosphoethanolamine (CPE), lysophosphatidylcholine (LPC) and lysophosphatidylethanolamine (LPE), but not on lysophosphatidylserine (LPS), and lysophosphatidylglycerol (LPG). It acts by transphosphatidylation, releasing exclusively cyclic phosphate products as second products. Induces dermonecrosis, hemolysis, increased vascular permeability, edema, inflammatory response, and platelet aggregation. This chain is Dermonecrotic toxin LlSicTox-alphaIV3, found in Loxosceles laeta (South American recluse spider).